The sequence spans 122 residues: Flagellar protein FliT (122 aa).

Residues 1-50 form a required for homodimerization region; that stretch reads MERQQQLLAAYQQIHSLSSQMIALAQTERWEDLVELELAYVTAVESTAAF. The segment at 60 to 98 is fliD binding; it reads LQELLRNKLQQILDNETELKRLLQQRMDQLKELIGQSTR.

The protein belongs to the FliT family. As to quaternary structure, homodimer. Interacts with FliD and FlhC.

The protein localises to the cytoplasm. The protein resides in the cytosol. In terms of biological role, dual-function protein that regulates the transcription of class 2 flagellar operons and that also acts as an export chaperone for the filament-capping protein FliD. As a transcriptional regulator, acts as an anti-FlhDC factor; it directly binds FlhC, thus inhibiting the binding of the FlhC/FlhD complex to class 2 promoters, resulting in decreased expression of class 2 flagellar operons. As a chaperone, effects FliD transition to the membrane by preventing its premature polymerization, and by directing it to the export apparatus. The protein is Flagellar protein FliT of Serratia proteamaculans (strain 568).